We begin with the raw amino-acid sequence, 802 residues long: Endoplasmin (802 aa).

The signal sequence occupies residues 1–21 (MRALWVLGLCCVLLTFGSARA). The SRT pseudosubstrate motif signature appears at 42 to 44 (SRT). N62 carries N-linked (GlcNAc...) asparagine glycosylation. S64 bears the Phosphoserine mark. N-linked (GlcNAc...) asparagine glycosylation occurs at N107. 3 residues coordinate ATP: N107, D149, and N162. K168 bears the N6-(2-hydroxyisobutyryl)lysine mark. Residue S172 is modified to Phosphoserine. F199 serves as a coordination point for ATP. N217 is a glycosylation site (N-linked (GlcNAc...) asparagine). The interval 288–323 (TVEEPAEEEEAAKEEKEEADDEAAVEEEEEEKKPKT) is disordered. The segment covering 289-317 (VEEPAEEEEAAKEEKEEADDEAAVEEEEE) has biased composition (acidic residues). S403 bears the Phosphoserine mark. K404 is modified (N6-succinyllysine). N445 carries an N-linked (GlcNAc...) asparagine glycan. A Phosphoserine modification is found at S447. K479 is subject to N6-acetyllysine. 2 N-linked (GlcNAc...) asparagine glycosylation sites follow: N481 and N502. Residue K633 is modified to N6-succinyllysine. The interval 750 to 802 (DPDAKVEEEPEEEPEDTTEDTEQDEEEEMDAGTDEEEQEQEPEKKSTAEKDEL) is disordered. Over residues 757–789 (EEPEEEPEDTTEDTEQDEEEEMDAGTDEEEQEQ) the composition is skewed to acidic residues. T782 bears the Phosphothreonine mark. The span at 790-802 (EPEKKSTAEKDEL) shows a compositional bias: basic and acidic residues. The Prevents secretion from ER signature appears at 799 to 802 (KDEL).

Belongs to the heat shock protein 90 family. As to quaternary structure, homodimer; disulfide-linked. Component of an EIF2 complex at least composed of CELF1/CUGBP1, CALR, CALR3, EIF2S1, EIF2S2, HSP90B1 and HSPA5. Part of a large chaperone multiprotein complex comprising DNAJB11, HSP90B1, HSPA5, HYOU, PDIA2, PDIA4, PDIA6, PPIB, SDF2L1, UGGT1 and very small amounts of ERP29, but not, or at very low levels, CALR nor CANX. Interacts with AIMP1; regulates its retention in the endoplasmic reticulum. Hyperglycosylated form interacts with OS9; promoting its degradation by the endoplasmic reticulum associated degradation (ERAD). Interacts with CNPY3. This interaction is disrupted in the presence of ATP. Interacts with TLR4 and TLR9, but not with TLR3. Interacts with MZB1 in a calcium-dependent manner. Interacts with METTL23. Interacts with IL1B; the interaction facilitates cargo translocation into the ERGIC. Interacts with EIF2AK3. In terms of processing, phosphorylated by CK2. N-glycosylated cotranslationally at Asn-217 by STT3A-containing OST-A complex: this glycosylation is constitutive. In response to various stress, 5 additional facultative sites (Asn-62, Asn-107, Asn-445, Asn-481 and Asn-502) can be glycosylated post-translationally by STT3B-containing OST-B complex, leading to a hyperglycosylated form that is degraded by the ER-associated degradation (ERAD) pathway. In normal conditions, the OST-A complex together with CCDC134 prevent glycosylation at facultative sites during protein folding, thereby preventing hyperglycosylation. Mechanistically, nascent HSP90B1 is tethered during translation to a specialized CCDC134-containing translocon that forms a microenvironment for its folding, in which STT3A associates with the SRT pseudosubstrate motif, and prevents access to facultative glycosylation sites until folding is completed, rendering its facultative sites inaccessible to the OST-B complex.

Its subcellular location is the endoplasmic reticulum lumen. The protein resides in the sarcoplasmic reticulum lumen. It localises to the melanosome. It carries out the reaction ATP + H2O = ADP + phosphate + H(+). Its function is as follows. ATP-dependent chaperone involved in the processing of proteins in the endoplasmic reticulum, regulating their transport. Together with MESD, acts as a modulator of the Wnt pathway by promoting the folding of LRP6, a coreceptor of the canonical Wnt pathway. When associated with CNPY3, required for proper folding of Toll-like receptors. Promotes folding and trafficking of TLR4 to the cell surface. May participate in the unfolding of cytosolic leaderless cargos (lacking the secretion signal sequence) such as the interleukin 1/IL-1 to facilitate their translocation into the ERGIC (endoplasmic reticulum-Golgi intermediate compartment) and secretion; the translocation process is mediated by the cargo receptor TMED10. The polypeptide is Endoplasmin (HSP90B1) (Oryctolagus cuniculus (Rabbit)).